The chain runs to 247 residues: Coproheme decarboxylase (247 aa).

Residues Arg129, 143-147 (YPMDK), His170, Gln183, and Ser221 each bind Fe-coproporphyrin III. Residue Tyr143 is part of the active site.

It belongs to the ChdC family. Type 1 subfamily. Fe-coproporphyrin III is required as a cofactor.

The enzyme catalyses Fe-coproporphyrin III + 2 H2O2 + 2 H(+) = heme b + 2 CO2 + 4 H2O. The catalysed reaction is Fe-coproporphyrin III + H2O2 + H(+) = harderoheme III + CO2 + 2 H2O. It catalyses the reaction harderoheme III + H2O2 + H(+) = heme b + CO2 + 2 H2O. Its pathway is porphyrin-containing compound metabolism; protoheme biosynthesis. Its function is as follows. Involved in coproporphyrin-dependent heme b biosynthesis. Catalyzes the decarboxylation of Fe-coproporphyrin III (coproheme) to heme b (protoheme IX), the last step of the pathway. The reaction occurs in a stepwise manner with a three-propionate intermediate. This is Coproheme decarboxylase from Bacillus cytotoxicus (strain DSM 22905 / CIP 110041 / 391-98 / NVH 391-98).